The primary structure comprises 417 residues: Phosphoglycerate kinase, cytosolic (417 aa).

Positions 23, 24, 25, 26, 39, 61, 62, 64, 65, 132, 168, and 169 each coordinate (2R)-3-phosphoglycerate. Positions 214 and 215 each coordinate ADP. Gly214 is a CDP binding site. Positions 215 and 216 each coordinate AMP. Ala215 contributes to the ATP binding site. Residue Ala215 participates in Mg(2+) binding. Lys216 is a (2R)-3-phosphoglycerate binding site. A CDP-binding site is contributed by Asp219. Asp219 contributes to the Mg(2+) binding site. Lys220 and Gly238 together coordinate ADP. Lys220 serves as a coordination point for AMP. Lys220 contributes to the ATP binding site. Gly238 lines the CDP pocket. Positions 239 and 311 each coordinate AMP. Positions 239 and 311 each coordinate ATP. Residues Ala311 and Asn335 each coordinate ADP. 2 residues coordinate CDP: Gly336 and Phe341. ADP-binding residues include Phe341, Glu342, Asp374, and Ser375. Glu342 provides a ligand contact to AMP. Residues Glu342, Asp374, and Ser375 each contribute to the ATP site. A Mg(2+)-binding site is contributed by Asp374.

It belongs to the phosphoglycerate kinase family. Monomer. It depends on Mg(2+) as a cofactor.

The protein resides in the cytoplasm. The catalysed reaction is (2R)-3-phosphoglycerate + ATP = (2R)-3-phospho-glyceroyl phosphate + ADP. Its pathway is carbohydrate degradation; glycolysis; pyruvate from D-glyceraldehyde 3-phosphate: step 2/5. This is Phosphoglycerate kinase, cytosolic (PGKB) from Leishmania major.